Consider the following 675-residue polypeptide: Zeaxanthin epoxidase, chloroplastic (675 aa).

Residues 1 to 25 (MASTVLYNSLTTSTTVFLRSHLPIS) constitute a chloroplast transit peptide. FAD is bound by residues 92-120 (RILV…KVFE) and 370-383 (KLTW…LLGD). An FHA domain is found at 558–622 (ICLSRKEDEP…HGTWITDNEG (65 aa)).

The cofactor is FAD.

It localises to the plastid. The protein localises to the chloroplast thylakoid membrane. It carries out the reaction all-trans-zeaxanthin + 4 reduced [2Fe-2S]-[ferredoxin] + 2 O2 + 4 H(+) = all-trans-violaxanthin + 4 oxidized [2Fe-2S]-[ferredoxin] + 2 H2O. Its pathway is plant hormone biosynthesis; abscisate biosynthesis. With respect to regulation, inhibited by diphenyleneiodonium (DPI). Functionally, converts zeaxanthin into antheraxanthin and subsequently violaxanthin. Involved in the epoxidation of zeaxanthin. This chain is Zeaxanthin epoxidase, chloroplastic, found in Spinacia oleracea (Spinach).